Consider the following 381-residue polypeptide: Formate dehydrogenase, mitochondrial (381 aa).

The transit peptide at 1 to 25 (MAMSRVASTAARAITSPSSLVFTRE) directs the protein to the mitochondrion. Substrate-binding residues include isoleucine 125 and asparagine 149. Residues threonine 150, 204 to 205 (RI), aspartate 224, 259 to 263 (PLTEK), asparagine 285, aspartate 311, and 335 to 338 (HISG) each bind NAD(+).

The protein belongs to the D-isomer specific 2-hydroxyacid dehydrogenase family. FDH subfamily. In terms of assembly, homodimer. In terms of tissue distribution, found at high levels in developing tubers, at intermediate level in stems, veins, stolons, and stamens, and at low level in leaves and roots.

The protein resides in the mitochondrion. The catalysed reaction is formate + NAD(+) = CO2 + NADH. Catalyzes the NAD(+)-dependent oxidation of formate to carbon dioxide. Involved in the cell stress response. Involved in formate-dependent oxygen uptake coupled to ATP synthesis. In Solanum tuberosum (Potato), this protein is Formate dehydrogenase, mitochondrial.